We begin with the raw amino-acid sequence, 728 residues long: MAAAASASSPVEFLLRRPAPRRRRLPLAGAFFAPTGLAGATLLRAVASLAASLVAGARPPSQRRNVDALARRLALLSAILESILLDTAAAGAFSDAANLCFRELYVVLFRAELLVSYVASAGRAWALLRSPHLAASFRDLDAELAVVLDVLPAASLRLSHDATGLLDLLRAHCRCRAPAQYHDPDEAALRERLMDALRQFDLGQPPDHPSLQSLLADMGISTAASCRAEIDYLEEQILSQEEDTDLPLVGSVLALLRYCLFAVFDPSNAKALRDWPLSGNRQRLLSIGGGDDTSFSVPKEFSCPISLDLMRDPVVASTGQTYDRPSIIQWIEEGHSTCPNSGQTLADHRLVPNRALRSLISQWCGVYGLQYDSPESNEGMAECVAASCSSRAAMEANKATARILVRMLEDGSENVKAVAAKEIRLLAKTGKQNRAFIADLGAIPLLCRLLLSNDWMAQENAVTALLNLSIFEPNKGRIMEQEGCLRLIVGVLQNGWTTEAKENAAATLFSLSVVHNFKKLIMNEPGAVEELASMLTKGTSRGKKDAVMALFNLSTHPESSARMLESCAVVALIQSLRNDTVSEEAAGALALLMKQPSIVHLVGSSETVITSLVGLMRRGTPKGKENAVSALYEICRRGGSALVQRVAKIPGLNTVIQTITLNGTKRAKKKASLIVKMCQRSQMPSAMALGSTLTVVDRSLVGNNTLRRAASFGSGELSNPISISVQVP.

Positions 296–370 constitute a U-box domain; the sequence is SVPKEFSCPI…SQWCGVYGLQ (75 aa). 2 ARM repeats span residues 441 to 483 and 526 to 568; these read GAIP…EQEG and GAVE…ESCA.

The enzyme catalyses S-ubiquitinyl-[E2 ubiquitin-conjugating enzyme]-L-cysteine + [acceptor protein]-L-lysine = [E2 ubiquitin-conjugating enzyme]-L-cysteine + N(6)-ubiquitinyl-[acceptor protein]-L-lysine.. Its pathway is protein modification; protein ubiquitination. Functionally, possesses E3 ubiquitin-protein ligase in vitro. The sequence is that of U-box domain-containing protein 4 (PUB4) from Oryza sativa subsp. japonica (Rice).